Consider the following 520-residue polypeptide: Bile acid--coenzyme A ligase (520 aa).

It belongs to the ATP-dependent AMP-binding enzyme family. Homodimer. Mg(2+) serves as cofactor.

It carries out the reaction cholate + ATP + CoA = choloyl-CoA + AMP + diphosphate. The enzyme catalyses deoxycholate + ATP + CoA = deoxycholoyl-CoA + AMP + diphosphate. It catalyses the reaction chenodeoxycholate + ATP + CoA = chenodeoxycholoyl-CoA + AMP + diphosphate. The protein operates within lipid metabolism; bile acid biosynthesis. Its activity is regulated as follows. Inhibited by diphosphate. Its function is as follows. Functions in the bile acid 7alpha-dehydroxylation pathway, which forms secondary bile acids via the 7alpha-dehydroxylation of primary bile acids, and is carried out by intestinal anaerobic bacteria. Catalyzes the initial step in this pathway, i.e. the ATP-dependent thioesterification of primary bile acids with coenzyme A. Is active with C-24 bile acids with free carboxyl groups such as cholate, deoxycholate and chenodeoxycholate. Produces AMP and pyrophosphate in addition to the bile acid-CoA thioester. This is Bile acid--coenzyme A ligase from Clostridium scindens (strain JCM 10418 / VPI 12708).